Consider the following 202-residue polypeptide: Large ribosomal subunit protein bL17 (202 aa).

The tract at residues 132 to 202 (DAAQKAASAG…TEVEKADDDK (71 aa)) is disordered. The segment covering 134-168 (AQKAASAGAQEVTAAAAPQAAVEPEAVETEASAET) has biased composition (low complexity). Residues 169–193 (AEAEVETAEVEAVDEASAEEADEAT) are compositionally biased toward acidic residues.

Belongs to the bacterial ribosomal protein bL17 family. Part of the 50S ribosomal subunit. Contacts protein L32.

The polypeptide is Large ribosomal subunit protein bL17 (Mycolicibacterium vanbaalenii (strain DSM 7251 / JCM 13017 / BCRC 16820 / KCTC 9966 / NRRL B-24157 / PYR-1) (Mycobacterium vanbaalenii)).